A 239-amino-acid chain; its full sequence is Serine protease SplF (239 aa).

The N-terminal stretch at 1–36 (MNKNIIIKSIAALTILTSVTGVGTTMVEGIQQTAKA) is a signal peptide. Active-site charge relay system residues include histidine 75, aspartate 114, and serine 192.

This sequence belongs to the peptidase S1B family.

It is found in the secreted. This Staphylococcus aureus (strain Mu50 / ATCC 700699) protein is Serine protease SplF (splF).